The sequence spans 490 residues: MSRMAEQQLYIHGGYTSATSGRTFETINPANGNVLATVQAAGREDVDRAVKSAQQGQKIWAAMTAMERSRILRRAVDILRERNDELAKLETLDTGKAYSETSTVDIVTGADVLEYYAGLIPALEGSQIPLRETSFVYTRREPLGVVAGIGAWNYPIQIALWKSAPALAAGNAMIFKPSEVTPLTALKLAEIYSEAGLPDGVFNVLPGVGAETGQYLTEHPGIAKVSFTGGVASGKKVMANSAASSLKEVTMELGGKSPLIVFDDADLDLAADIAMMANFFSSGQVCTNGTRVFVPAKCKAAFEQKILARVERIRAGDVFDPQTNFGPLVSFPHRDNVLRYIAKGKEEGARVLCGGDVLKGDGFDNGAWVAPTVFTDCSDDMTIVREEIFGPVMSLLTYESEDEVIRRANDTDYGLAAGIVTADLNRAHRVIHQLEAGICWINTWGESPAEMPVGGYKHSGIGRENGVMTLQSYTQVKSIQVEMAKFQSIF.

Thr-26, Ile-27, and Asp-93 together coordinate K(+). 150-152 (GAW) contributes to the NAD(+) binding site. The active-site Charge relay system is Lys-162. Residue 176-179 (KPSE) coordinates NAD(+). Val-180 is a K(+) binding site. 230–233 (GVAS) provides a ligand contact to NAD(+). Position 246 (Leu-246) interacts with K(+). The Proton acceptor role is filled by Glu-252. NAD(+)-binding residues include Gly-254, Cys-286, and Glu-387. The active-site Nucleophile is Cys-286. Cys-286 is modified (cysteine sulfenic acid (-SOH)). Lys-457 and Gly-460 together coordinate K(+). Glu-464 (charge relay system) is an active-site residue.

It belongs to the aldehyde dehydrogenase family. In terms of assembly, dimer of dimers. It depends on K(+) as a cofactor.

The catalysed reaction is betaine aldehyde + NAD(+) + H2O = glycine betaine + NADH + 2 H(+). The protein operates within amine and polyamine biosynthesis; betaine biosynthesis via choline pathway; betaine from betaine aldehyde: step 1/1. Involved in the biosynthesis of the osmoprotectant glycine betaine. Catalyzes the irreversible oxidation of betaine aldehyde to the corresponding acid. The sequence is that of Betaine aldehyde dehydrogenase from Escherichia coli (strain 55989 / EAEC).